The primary structure comprises 557 residues: Arginine--tRNA ligase (557 aa).

The short motif at 132-142 (ANPTGLLHMGN) is the 'HIGH' region element.

Belongs to the class-I aminoacyl-tRNA synthetase family. In terms of assembly, monomer.

The protein localises to the cytoplasm. The catalysed reaction is tRNA(Arg) + L-arginine + ATP = L-arginyl-tRNA(Arg) + AMP + diphosphate. This chain is Arginine--tRNA ligase, found in Carboxydothermus hydrogenoformans (strain ATCC BAA-161 / DSM 6008 / Z-2901).